We begin with the raw amino-acid sequence, 242 residues long: Probable proteasome subunit alpha type-7 (242 aa).

Belongs to the peptidase T1A family. The 26S proteasome consists of a 20S proteasome core and two 19S regulatory subunits. The 20S proteasome core is composed of 28 subunits that are arranged in four stacked rings, resulting in a barrel-shaped structure. The two end rings are each formed by seven alpha subunits, and the two central rings are each formed by seven beta subunits. The catalytic chamber with the active sites is on the inside of the barrel.

Its subcellular location is the cytoplasm. It is found in the nucleus. Functionally, the proteasome degrades poly-ubiquitinated proteins in the cytoplasm and in the nucleus. It is essential for the regulated turnover of proteins and for the removal of misfolded proteins. The proteasome is a multicatalytic proteinase complex that is characterized by its ability to cleave peptides with Arg, Phe, Tyr, Leu, and Glu adjacent to the leaving group at neutral or slightly basic pH. It has an ATP-dependent proteolytic activity. The chain is Probable proteasome subunit alpha type-7 (PRE10) from Encephalitozoon cuniculi (strain GB-M1) (Microsporidian parasite).